The following is a 357-amino-acid chain: Meiotically up-regulated gene 135 protein (357 aa).

It belongs to the UPF0612 family.

The protein localises to the nucleus. In terms of biological role, has a role in meiosis. This Schizosaccharomyces pombe (strain 972 / ATCC 24843) (Fission yeast) protein is Meiotically up-regulated gene 135 protein (mug135).